Here is a 572-residue protein sequence, read N- to C-terminus: Proline--tRNA ligase (572 aa).

The protein belongs to the class-II aminoacyl-tRNA synthetase family. ProS type 1 subfamily. Homodimer.

It is found in the cytoplasm. It carries out the reaction tRNA(Pro) + L-proline + ATP = L-prolyl-tRNA(Pro) + AMP + diphosphate. Catalyzes the attachment of proline to tRNA(Pro) in a two-step reaction: proline is first activated by ATP to form Pro-AMP and then transferred to the acceptor end of tRNA(Pro). As ProRS can inadvertently accommodate and process non-cognate amino acids such as alanine and cysteine, to avoid such errors it has two additional distinct editing activities against alanine. One activity is designated as 'pretransfer' editing and involves the tRNA(Pro)-independent hydrolysis of activated Ala-AMP. The other activity is designated 'posttransfer' editing and involves deacylation of mischarged Ala-tRNA(Pro). The misacylated Cys-tRNA(Pro) is not edited by ProRS. This Serratia proteamaculans (strain 568) protein is Proline--tRNA ligase.